The following is a 270-amino-acid chain: Formamidopyrimidine-DNA glycosylase (270 aa).

Residue Pro2 is the Schiff-base intermediate with DNA of the active site. Glu3 acts as the Proton donor in catalysis. The active-site Proton donor; for beta-elimination activity is Lys58. Residues His91, Arg109, and Arg151 each coordinate DNA. The segment at 236–270 (LVYGRGGEACKTCQKPLKEIRMNDRTTVYCVTCQQ) adopts an FPG-type zinc-finger fold. Arg260 serves as the catalytic Proton donor; for delta-elimination activity.

The protein belongs to the FPG family. Monomer. It depends on Zn(2+) as a cofactor.

The enzyme catalyses Hydrolysis of DNA containing ring-opened 7-methylguanine residues, releasing 2,6-diamino-4-hydroxy-5-(N-methyl)formamidopyrimidine.. It catalyses the reaction 2'-deoxyribonucleotide-(2'-deoxyribose 5'-phosphate)-2'-deoxyribonucleotide-DNA = a 3'-end 2'-deoxyribonucleotide-(2,3-dehydro-2,3-deoxyribose 5'-phosphate)-DNA + a 5'-end 5'-phospho-2'-deoxyribonucleoside-DNA + H(+). Its function is as follows. Involved in base excision repair of DNA damaged by oxidation or by mutagenic agents. Acts as a DNA glycosylase that recognizes and removes damaged bases. Has a preference for oxidized purines, such as 7,8-dihydro-8-oxoguanine (8-oxoG). Has AP (apurinic/apyrimidinic) lyase activity and introduces nicks in the DNA strand. Cleaves the DNA backbone by beta-delta elimination to generate a single-strand break at the site of the removed base with both 3'- and 5'-phosphates. In Cellvibrio japonicus (strain Ueda107) (Pseudomonas fluorescens subsp. cellulosa), this protein is Formamidopyrimidine-DNA glycosylase.